The chain runs to 270 residues: MAVGVFDSGLGGLTVLSAIAARMPDLPLVYLGDNAHTPYGVRDADDIFDLTCAGVERLWAEGCDLVILACNTASAAALKRMQETWLPKDKRVLGVFVPMIEALTERRWGDNSPPREVAVKHVALFATPATVASRAFQRELAFRAIGVDVEAQPCGGVVDAIEMGDEILAEALVTSHVEALLRRMPHPEAAILGCTHYPLVQAAFQKALGPQVTVYSQPNLVAESLEDYLGRHPEMLGAGNVSRFLTTGDPERVSGKATQFLRHPIRFESA.

Residues 7-8 (DS) and 39-40 (YG) each bind substrate. Cys-70 acts as the Proton donor/acceptor in catalysis. 71–72 (NT) lines the substrate pocket. Catalysis depends on Cys-194, which acts as the Proton donor/acceptor. 195 to 196 (TH) contributes to the substrate binding site.

Belongs to the aspartate/glutamate racemases family.

It catalyses the reaction L-glutamate = D-glutamate. It participates in cell wall biogenesis; peptidoglycan biosynthesis. Its function is as follows. Provides the (R)-glutamate required for cell wall biosynthesis. This chain is Glutamate racemase, found in Paracoccus denitrificans (strain Pd 1222).